The sequence spans 332 residues: Malate dehydrogenase, cytoplasmic (332 aa).

Residues 16–17, aspartate 43, and glycine 90 contribute to the NAD(+) site; that span reads QI. Position 99 (arginine 99) interacts with oxaloacetate. 2 residues coordinate NAD(+): glutamine 113 and asparagine 132. The oxaloacetate site is built by asparagine 132, arginine 163, histidine 188, and serine 243. Histidine 188 serves as the catalytic Proton acceptor.

It belongs to the LDH/MDH superfamily. MDH type 2 family. Homodimer.

The protein localises to the cytoplasm. The enzyme catalyses (S)-malate + NAD(+) = oxaloacetate + NADH + H(+). In Medicago sativa (Alfalfa), this protein is Malate dehydrogenase, cytoplasmic (CMDH).